A 398-amino-acid polypeptide reads, in one-letter code: ATP-dependent RNA helicase eIF4A (398 aa).

The short motif at 25-53 is the Q motif element; sequence DSFDAMNLRAELLRGVYAYGFERPSAIQQ. A Helicase ATP-binding domain is found at 56-226; it reads IMPVIKGSDV…TKFMRDPVRI (171 aa). Residue 69–76 coordinates ATP; that stretch reads AQSGTGKT. The DEAD box motif lies at 174 to 177; it reads DEAD. A Helicase C-terminal domain is found at 237–398; sequence GIKQFYIAVE…EMPMNVADLI (162 aa).

It belongs to the DEAD box helicase family. eIF4A subfamily. Component of the eIF4F complex, which composition varies with external and internal environmental conditions. It is composed of at least eIF4A, eIF4E and eIF4G.

The protein resides in the cytoplasm. It catalyses the reaction ATP + H2O = ADP + phosphate + H(+). Functionally, ATP-dependent RNA helicase which is a subunit of the eIF4F complex involved in cap recognition and is required for mRNA binding to ribosome. In the current model of translation initiation, eIF4A unwinds RNA secondary structures in the 5'-UTR of mRNAs which is necessary to allow efficient binding of the small ribosomal subunit, and subsequent scanning for the initiator codon. This chain is ATP-dependent RNA helicase eIF4A (TIF1), found in Coccidioides immitis (strain RS) (Valley fever fungus).